We begin with the raw amino-acid sequence, 274 residues long: Single-stranded DNA-binding protein WHY1, chloroplastic (274 aa).

The transit peptide at 1-54 directs the protein to the chloroplast; the sequence is MSNFSLSPSPTSGFSLNLQNPTKTSYLSFSSSINTIFAPLSSNTTKSFSGLTHK. The tract at residues 100-105 is required for ssDNA binding; that stretch reads KGKAAL. Residues 178-191 carry the Nuclear localization signal motif; the sequence is KGRSDEGRVRKVLK. The tract at residues 253 to 274 is disordered; sequence PEDASRSNNANPRSGAELEWNR.

It belongs to the Whirly family. As to quaternary structure, homotetramer.

Its subcellular location is the nucleus. It is found in the plastid. It localises to the chloroplast. Single-stranded DNA-binding protein that acts as a transcriptional activator of the pathogenesis-related gene PR-10a. Upon elicitation, binds a 30bp promoter sequence known as elicitor element response (ERE) and is required for PR-10a expression. The polypeptide is Single-stranded DNA-binding protein WHY1, chloroplastic (WHY1) (Solanum tuberosum (Potato)).